The chain runs to 441 residues: Damage-control phosphatase ARMT1 (441 aa).

A2 is subject to N-acetylalanine. N6-acetyllysine is present on K40. S102 carries the phosphoserine modification. Positions 253 and 254 each coordinate Mn(2+). 253–254 contributes to the substrate binding site; it reads DN. Residues E258 and D291 each coordinate S-adenosyl-L-methionine. D291 provides a ligand contact to Mn(2+). Residues 367–371 and K404 contribute to the substrate site; that span reads DLNYR. The short motif at 401 to 404 is the Subfamily III RTxK motif element; sequence RTLK.

Belongs to the damage-control phosphatase family. Sugar phosphate phosphatase III subfamily. It depends on Mn(2+) as a cofactor. The cofactor is Ni(2+). Automethylated.

The enzyme catalyses beta-D-fructose 1-phosphate + H2O = D-fructose + phosphate. The catalysed reaction is beta-D-fructose 6-phosphate = dihydroxyacetone + D-glyceraldehyde 3-phosphate. It catalyses the reaction L-glutamyl-[protein] + S-adenosyl-L-methionine = [protein]-L-glutamate 5-O-methyl ester + S-adenosyl-L-homocysteine. Metal-dependent phosphatase that shows phosphatase activity against several substrates, including fructose-1-phosphate and fructose-6-phosphate. Its preference for fructose-1-phosphate, a strong glycating agent that causes DNA damage rather than a canonical yeast metabolite, suggests a damage-control function in hexose phosphate metabolism. Has also been shown to have O-methyltransferase activity that methylates glutamate residues of target proteins to form gamma-glutamyl methyl ester residues. Possibly methylates PCNA, suggesting it is involved in the DNA damage response. The protein is Damage-control phosphatase ARMT1 of Homo sapiens (Human).